A 227-amino-acid chain; its full sequence is Isopentenyl-diphosphate Delta-isomerase 1 (227 aa).

Lys36 is a substrate binding site. The Mg(2+) site is built by His40 and His51. A Nudix hydrolase domain is found at Leu49–Ile199. Residues Arg70 and Lys74 each coordinate substrate. Cys86 (proton acceptor) is an active-site residue. Ser87 lines the substrate pocket. Positions 146 and 148 each coordinate Mg(2+). Residue Glu148 is part of the active site. Lys176 carries the N6-acetyllysine modification.

This sequence belongs to the IPP isomerase type 1 family. In terms of assembly, monomer. Mg(2+) is required as a cofactor.

It localises to the peroxisome. It catalyses the reaction isopentenyl diphosphate = dimethylallyl diphosphate. It participates in isoprenoid biosynthesis; dimethylallyl diphosphate biosynthesis; dimethylallyl diphosphate from isopentenyl diphosphate: step 1/1. Catalyzes the 1,3-allylic rearrangement of the homoallylic substrate isopentenyl (IPP) to its highly electrophilic allylic isomer, dimethylallyl diphosphate (DMAPP). The protein is Isopentenyl-diphosphate Delta-isomerase 1 (IDI1) of Bos taurus (Bovine).